An 896-amino-acid chain; its full sequence is Alanine--tRNA ligase (896 aa).

Zn(2+)-binding residues include His580, His584, Cys683, and His687.

This sequence belongs to the class-II aminoacyl-tRNA synthetase family. Requires Zn(2+) as cofactor.

It localises to the cytoplasm. The catalysed reaction is tRNA(Ala) + L-alanine + ATP = L-alanyl-tRNA(Ala) + AMP + diphosphate. Its function is as follows. Catalyzes the attachment of alanine to tRNA(Ala) in a two-step reaction: alanine is first activated by ATP to form Ala-AMP and then transferred to the acceptor end of tRNA(Ala). Also edits incorrectly charged Ser-tRNA(Ala) and Gly-tRNA(Ala) via its editing domain. The chain is Alanine--tRNA ligase from Mycolicibacterium smegmatis (strain ATCC 700084 / mc(2)155) (Mycobacterium smegmatis).